We begin with the raw amino-acid sequence, 65 residues long: KEGYPVGRDGCKISCVINNNFCKVECQAKWRQSDGYCYFWGLSCYCTNLPEDAQVWDSSTNKCGG.

One can recognise an LCN-type CS-alpha/beta domain in the interval 1 to 64; that stretch reads KEGYPVGRDG…VWDSSTNKCG (64 aa). 4 cysteine pairs are disulfide-bonded: Cys-11–Cys-63, Cys-15–Cys-37, Cys-22–Cys-44, and Cys-26–Cys-46.

This sequence belongs to the long (4 C-C) scorpion toxin superfamily. Sodium channel inhibitor family. Beta subfamily. Expressed by the venom gland.

The protein resides in the secreted. In terms of biological role, beta toxins bind voltage-independently at site-4 of sodium channels (Nav) and shift the voltage of activation toward more negative potentials thereby affecting sodium channel activation and promoting spontaneous and repetitive firing. This Rhopalurus junceus (Caribbean blue scorpion) protein is Putative beta-neurotoxin RjAa12.